A 265-amino-acid polypeptide reads, in one-letter code: Cell division protein DivIB (265 aa).

The Cytoplasmic portion of the chain corresponds to methionine 1–leucine 33. The chain crosses the membrane as a helical span at residues isoleucine 34–phenylalanine 54. The POTRA domain maps to phenylalanine 54–arginine 122. The Extracellular portion of the chain corresponds to asparagine 55 to lysine 265.

Belongs to the FtsQ/DivIB family. DivIB subfamily.

It localises to the cell membrane. Functionally, cell division protein that may be involved in stabilizing or promoting the assembly of the division complex. The polypeptide is Cell division protein DivIB (Clostridium tetani (strain Massachusetts / E88)).